Consider the following 497-residue polypeptide: 4,4'-diaponeurosporene oxygenase (497 aa).

Residue 7–19 coordinates FAD; that stretch reads VIGGGLGGISAAI.

Belongs to the carotenoid/retinoid oxidoreductase family. CrtP subfamily. FAD is required as a cofactor.

It carries out the reaction all-trans-4,4'-diaponeurosporene + 2 AH2 + 2 O2 = 4,4'-diaponeurosporenal + 2 A + 3 H2O. It participates in carotenoid biosynthesis; staphyloxanthin biosynthesis; staphyloxanthin from farnesyl diphosphate: step 3/5. Its function is as follows. Involved in the biosynthesis of the yellow-orange carotenoid staphyloxanthin, which plays a role in the virulence via its protective function against oxidative stress. Catalyzes the oxidation of the terminal methyl side group of 4,4'-diaponeurosporene to form 4,4'-diaponeurosporen-4-al. This Staphylococcus aureus (strain MW2) protein is 4,4'-diaponeurosporene oxygenase.